A 130-amino-acid polypeptide reads, in one-letter code: Ribosome-binding factor A (130 aa).

The protein belongs to the RbfA family. Monomer. Binds 30S ribosomal subunits, but not 50S ribosomal subunits or 70S ribosomes.

It localises to the cytoplasm. In terms of biological role, one of several proteins that assist in the late maturation steps of the functional core of the 30S ribosomal subunit. Associates with free 30S ribosomal subunits (but not with 30S subunits that are part of 70S ribosomes or polysomes). Required for efficient processing of 16S rRNA. May interact with the 5'-terminal helix region of 16S rRNA. The protein is Ribosome-binding factor A of Prochlorococcus marinus (strain SARG / CCMP1375 / SS120).